The primary structure comprises 380 residues: Cytochrome b (380 aa).

Helical transmembrane passes span 33-53, 77-98, 113-133, and 178-198; these read SGSL…FLAM, WLIR…YLHV, WNIG…GYVL, and FFAF…IHLL. His83 and His97 together coordinate heme b. Positions 182 and 196 each coordinate heme b. His201 lines the a ubiquinone pocket. Helical transmembrane passes span 226-246, 288-308, 320-340, and 347-367; these read YKDL…ALFS, LGGV…PILH, LSQI…WIGG, and FVLI…IALP.

This sequence belongs to the cytochrome b family. As to quaternary structure, the cytochrome bc1 complex contains 3 respiratory subunits (MT-CYB, CYC1 and UQCRFS1), 2 core proteins (UQCRC1 and UQCRC2) and probably 6 low-molecular weight proteins. Heme b serves as cofactor.

It localises to the mitochondrion inner membrane. Functionally, component of the ubiquinol-cytochrome c reductase complex (complex III or cytochrome b-c1 complex) that is part of the mitochondrial respiratory chain. The b-c1 complex mediates electron transfer from ubiquinol to cytochrome c. Contributes to the generation of a proton gradient across the mitochondrial membrane that is then used for ATP synthesis. The sequence is that of Cytochrome b (mt-cyb) from Polyodon spathula (North American paddlefish).